A 115-amino-acid polypeptide reads, in one-letter code: Large ribosomal subunit protein bL19 (115 aa).

The protein belongs to the bacterial ribosomal protein bL19 family.

In terms of biological role, this protein is located at the 30S-50S ribosomal subunit interface and may play a role in the structure and function of the aminoacyl-tRNA binding site. The sequence is that of Large ribosomal subunit protein bL19 from Streptococcus pneumoniae (strain JJA).